The primary structure comprises 2742 residues: Polycystin-1-like protein 1 (2742 aa).

At 1–1602 (MFCLWIFSLA…LDQFLSVSRD (1602 aa)) the chain is on the extracellular side. 5 N-linked (GlcNAc...) asparagine glycosylation sites follow: Asn35, Asn133, Asn149, Asn220, and Asn267. PKD domains lie at 286–372 (AVRI…VKLN) and 370–454 (KLNR…PCQP). Residues Asn383, Asn397, Asn486, Asn545, Asn693, Asn709, and Asn735 are each glycosylated (N-linked (GlcNAc...) asparagine). In terms of domain architecture, REJ spans 452–1338 (CQPPPVKNLG…ITFFLPASLI (887 aa)). 2 disordered regions span residues 767-829 (SPSR…QSDP) and 846-908 (DLRG…RPSV). The segment covering 779–799 (SELTDSPVSSVTVGFSGSESF) has biased composition (polar residues). Over residues 880–893 (SFPSDSDSFSHSSS) the composition is skewed to low complexity. 7 N-linked (GlcNAc...) asparagine glycosylation sites follow: Asn1080, Asn1101, Asn1201, Asn1318, Asn1437, Asn1490, and Asn1568. In terms of domain architecture, GAIN-B spans 1436–1587 (HNFSITQEHL…KVLQQQIQSS (152 aa)). 2 disulfide bridges follow: Cys1541–Cys1569 and Cys1556–Cys1571. The GPS stretch occupies residues 1541–1587 (CLSWEDQQGSWTQNGCRAQTNDKTSAVNCSCHHLKPLKVLQQQIQSS). A helical membrane pass occupies residues 1603-1623 (LTVVFVLLLCVSLNIPVLVWC). The Cytoplasmic segment spans residues 1624-1812 (KKTDATSEEN…SPHLFTRAQR (189 aa)). One can recognise a PLAT domain in the interval 1648–1769 (HFYAVTVHTG…GDGQVERMLR (122 aa)). Residues 1813 to 1833 (LCVCLLLFLGYACVNIIITHQ) form a helical membrane-spanning segment. Residues 1834–1851 (RDDQLPFDLGVIDVTSVS) lie on the Extracellular side of the membrane. The chain crosses the membrane as a helical span at residues 1852–1872 (IATGLVSVVAVLPVAMVISFL). The Cytoplasmic segment spans residues 1873–2005 (FRVKSGRMTL…YRLASLLYHC (133 aa)). Residues 2006 to 2026 (VAWTLCLLFCLSCLILSAVLG) traverse the membrane as a helical segment. The Extracellular portion of the chain corresponds to 2027–2040 (TRLNSGKILHWIHS). Residues 2041–2061 (LFVSLTFCFFVIHPATILVLA) form a helical membrane-spanning segment. Over 2062-2151 (AVVSWRFKRS…KQAVIHKMLR (90 aa)) the chain is Cytoplasmic. The chain crosses the membrane as a helical span at residues 2152 to 2172 (DLCLCGSMFFLMVCITYGSPV). Topologically, residues 2173–2344 (DEHYPLNAAF…QSVRLYHSPS (172 aa)) are extracellular. Asn2218 is a glycosylation site (N-linked (GlcNAc...) asparagine). Residues 2345–2365 (MLDYTVMVWQLLFLLLSLVNL) form a helical membrane-spanning segment. Over 2366 to 2378 (YHQTSTAAQHGLM) the chain is Cytoplasmic. The helical transmembrane segment at 2379-2401 (GYWKTTSISVEVSLVIVSLVYYV) threads the bilayer. Residues 2402 to 2442 (HYVYHPTMVMEVAEQLRRNHREHVDVSTLANSEQFSRTLRG) are Extracellular-facing. A helical membrane pass occupies residues 2443–2463 (IILFLLAVKCVTVVRLNRILA). Residues 2464–2467 (PSMP) are Cytoplasmic-facing. Residues 2468–2488 (LLSLSSLLWPAISGLLLLSIF) traverse the membrane as a helical segment. At 2489 to 2528 (SCMGRLLYIERTFHSIQTVLWHFWSLRKSRDLISLWRDFY) the chain is on the extracellular side. The helical transmembrane segment at 2529 to 2549 (YFGLLYASSAMLTTMVFAVMI) threads the bilayer. Residues 2550–2742 (RKAKRSPSTK…LVHHEQGTKN (193 aa)) lie on the Cytoplasmic side of the membrane.

It belongs to the polycystin family. Heterodimer. Interacts with pkd2 to form a calcium channel. Interacts with pkd2l1 to form ciliary calcium channel. Expressed in Kupffer's vesicle, an organ equivalent to the node.

It is found in the cell projection. Its subcellular location is the cilium membrane. Component of a calcium-permeant ion channel formed by PKD1L2 and PKD1L1 in primary cilia, where it controls cilium calcium concentration, without affecting cytoplasmic calcium concentration, and regulates sonic hedgehog/SHH signaling and GLI2 transcription. The PKD1L1:PKD2L1 channel complex is mechanosensitive only at high pressures and is highly temperature sensitive. Also involved in left/right axis specification downstream of nodal flow by forming a complex with PKD2 in cilia to facilitate flow detection in left/right patterning. The polypeptide is Polycystin-1-like protein 1 (Oryzias latipes (Japanese rice fish)).